The following is a 74-amino-acid chain: uncharacterized protein (74 aa).

This is an uncharacterized protein from Bacillus subtilis (strain 168).